The sequence spans 583 residues: ATP-dependent lipid A-core flippase (583 aa).

The next 7 membrane-spanning stretches (helical) occupy residues 18 to 38 (LWPI…TLII), 65 to 85 (IFMW…MSGF), 105 to 127 (LLFN…ATLM), 143 to 163 (GALI…IMMF), 167 to 187 (WQLS…IKLV), 252 to 272 (VFEP…LYIA), and 277 to 297 (VIEM…IALM). An ABC transmembrane type-1 domain is found at 30–312 (IIASITLIIN…LTNVSAQFQR (283 aa)). Residues 344–580 (IIFDNVTFFY…KGVYSQLYKF (237 aa)) form the ABC transporter domain. 378 to 385 (GRSGSGKS) is an ATP binding site.

Belongs to the ABC transporter superfamily. Lipid exporter (TC 3.A.1.106) family. As to quaternary structure, homodimer.

The protein resides in the cell inner membrane. It carries out the reaction ATP + H2O + lipid A-core oligosaccharideSide 1 = ADP + phosphate + lipid A-core oligosaccharideSide 2.. Its function is as follows. Involved in lipopolysaccharide (LPS) biosynthesis. Translocates lipid A-core from the inner to the outer leaflet of the inner membrane. Transmembrane domains (TMD) form a pore in the inner membrane and the ATP-binding domain (NBD) is responsible for energy generation. The protein is ATP-dependent lipid A-core flippase of Blochmanniella floridana.